A 98-amino-acid polypeptide reads, in one-letter code: Integration host factor subunit alpha (98 aa).

A disordered region spans residues 49–71 (FGNFDLRDKNQRPGRNPKTGEDI).

It belongs to the bacterial histone-like protein family. As to quaternary structure, heterodimer of an alpha and a beta chain.

Functionally, this protein is one of the two subunits of integration host factor, a specific DNA-binding protein that functions in genetic recombination as well as in transcriptional and translational control. This chain is Integration host factor subunit alpha, found in Edwardsiella ictaluri (strain 93-146).